We begin with the raw amino-acid sequence, 373 residues long: Transcription factor bHLH87 (373 aa).

Residues 127 to 227 (SAESENREIT…GGSSNISFQH (101 aa)) are disordered. Residues 188–218 (PQDDSEKGGFKLIYDENQSKSKKPRTEKERG) are compositionally biased toward basic and acidic residues. The bHLH domain occupies 275-324 (ISTDPQTVAARQRRERISEKIRVLQTLVPGGTKMDTASMLDEAANYLKFL).

In terms of assembly, homodimer. In terms of tissue distribution, flowers.

The protein localises to the nucleus. The sequence is that of Transcription factor bHLH87 (BHLH87) from Arabidopsis thaliana (Mouse-ear cress).